A 451-amino-acid polypeptide reads, in one-letter code: Tubulin alpha chain (451 aa).

A GTP-binding site is contributed by Gln11. Lys40 is subject to N6-acetyllysine. Residues Glu71, Gly144, Thr145, Thr179, Asn206, and Asn228 each coordinate GTP. Glu71 contributes to the Mg(2+) binding site. Residue Glu254 is part of the active site.

This sequence belongs to the tubulin family. In terms of assembly, dimer of alpha and beta chains. A typical microtubule is a hollow water-filled tube with an outer diameter of 25 nm and an inner diameter of 15 nM. Alpha-beta heterodimers associate head-to-tail to form protofilaments running lengthwise along the microtubule wall with the beta-tubulin subunit facing the microtubule plus end conferring a structural polarity. Microtubules usually have 13 protofilaments but different protofilament numbers can be found in some organisms and specialized cells. Mg(2+) is required as a cofactor. In terms of processing, undergoes a tyrosination/detyrosination cycle, the cyclic removal and re-addition of a C-terminal tyrosine residue by the enzymes tubulin tyrosine carboxypeptidase (TTCP) and tubulin tyrosine ligase (TTL), respectively. Acetylation of alpha chains at Lys-40 stabilizes microtubules and affects affinity and processivity of microtubule motors. This modification has a role in multiple cellular functions, ranging from cell motility, cell cycle progression or cell differentiation to intracellular trafficking and signaling.

It is found in the cytoplasm. Its subcellular location is the cytoskeleton. The catalysed reaction is GTP + H2O = GDP + phosphate + H(+). Tubulin is the major constituent of microtubules, a cylinder consisting of laterally associated linear protofilaments composed of alpha- and beta-tubulin heterodimers. Microtubules grow by the addition of GTP-tubulin dimers to the microtubule end, where a stabilizing cap forms. Below the cap, tubulin dimers are in GDP-bound state, owing to GTPase activity of alpha-tubulin. The polypeptide is Tubulin alpha chain (TUBA) (Triticum aestivum (Wheat)).